Reading from the N-terminus, the 120-residue chain is MKLTRRESKNRRHRRVRGKVVGSPERPRLAVFRSNEHIYAQVIDDSQHQTIVAASTLEPELKSSLASGANRDASVQVGKLIAVRSLEKGITKVVFDRGGNLYHGRVKALADAAREAGLDF.

A disordered region spans residues 1–22 (MKLTRRESKNRRHRRVRGKVVG). Residues 8 to 18 (SKNRRHRRVRG) are compositionally biased toward basic residues.

It belongs to the universal ribosomal protein uL18 family. In terms of assembly, part of the 50S ribosomal subunit; part of the 5S rRNA/L5/L18/L25 subcomplex. Contacts the 5S and 23S rRNAs.

In terms of biological role, this is one of the proteins that bind and probably mediate the attachment of the 5S RNA into the large ribosomal subunit, where it forms part of the central protuberance. This Nostoc punctiforme (strain ATCC 29133 / PCC 73102) protein is Large ribosomal subunit protein uL18.